Consider the following 775-residue polypeptide: Endothelin-converting enzyme-like 1 (775 aa).

Topologically, residues 1–61 (MEAPYSMTAH…LPRWNRREVC (61 aa)) are cytoplasmic. The segment at 23–51 (CGTGGARGTSLPPGFPRSSGRSASGARSG) is disordered. The segment covering 32-51 (SLPPGFPRSSGRSASGARSG) has biased composition (low complexity). The helical; Signal-anchor for type II membrane protein transmembrane segment at 62–82 (LLSGLVFAAGLCAILAAMLAL) threads the bilayer. Over 83-775 (KYLGPGAAGT…MNPVHKCSVW (693 aa)) the chain is Lumenal. Positions 99-775 (GCPERKAFAR…MNPVHKCSVW (677 aa)) constitute a Peptidase M13 domain. 4 disulfide bridges follow: Cys-124–Cys-760, Cys-132–Cys-720, Cys-188–Cys-441, and Cys-649–Cys-772. 2 N-linked (GlcNAc...) asparagine glycosylation sites follow: Asn-255 and Asn-322. His-612 serves as a coordination point for Zn(2+). The active site involves Glu-613. Residue His-616 coordinates Zn(2+). The N-linked (GlcNAc...) asparagine glycan is linked to Asn-656. Glu-672 is a binding site for Zn(2+). The Proton donor role is filled by Asp-676.

The protein belongs to the peptidase M13 family. Zn(2+) serves as cofactor. In terms of tissue distribution, highly expressed in the CNS, in particular in neurons of the caudate putamen, diagonal band, the paraventricular nucleus of the thalamus, part of the hypothalamus, in cranial motor nuclei, inferior olive, and substantia gelatinosa of the spinal tract trigeminal nucleus. Not detected in cerebral cortex, hippocampus and cerebellum.

It localises to the membrane. Its function is as follows. May contribute to the degradation of peptide hormones and be involved in the inactivation of neuronal peptides. Cleaves the synthetic substrate Z-Gly-Gly-Leu-pNA and releases pNA. May protect against C2-ceramide-induced apoptosis. This is Endothelin-converting enzyme-like 1 (Ecel1) from Rattus norvegicus (Rat).